A 119-amino-acid chain; its full sequence is Large ribosomal subunit protein bL20 (119 aa).

This sequence belongs to the bacterial ribosomal protein bL20 family.

Functionally, binds directly to 23S ribosomal RNA and is necessary for the in vitro assembly process of the 50S ribosomal subunit. It is not involved in the protein synthesizing functions of that subunit. The chain is Large ribosomal subunit protein bL20 from Streptococcus equi subsp. equi (strain 4047).